Reading from the N-terminus, the 343-residue chain is Uroporphyrinogen decarboxylase (343 aa).

Substrate contacts are provided by residues 23-27 (RQAGR), Asp73, Tyr150, Ser205, and His322.

The protein belongs to the uroporphyrinogen decarboxylase family. As to quaternary structure, homodimer.

The protein resides in the cytoplasm. The catalysed reaction is uroporphyrinogen III + 4 H(+) = coproporphyrinogen III + 4 CO2. Its pathway is porphyrin-containing compound metabolism; protoporphyrin-IX biosynthesis; coproporphyrinogen-III from 5-aminolevulinate: step 4/4. Its function is as follows. Catalyzes the decarboxylation of four acetate groups of uroporphyrinogen-III to yield coproporphyrinogen-III. This is Uroporphyrinogen decarboxylase from Cereibacter sphaeroides (strain KD131 / KCTC 12085) (Rhodobacter sphaeroides).